The chain runs to 161 residues: Large ribosomal subunit protein uL11 (161 aa).

This sequence belongs to the universal ribosomal protein uL11 family. As to quaternary structure, part of the ribosomal stalk of the 50S ribosomal subunit. Interacts with L10 and the large rRNA to form the base of the stalk. L10 forms an elongated spine to which L12 dimers bind in a sequential fashion forming a multimeric L10(L12)X complex.

Functionally, forms part of the ribosomal stalk which helps the ribosome interact with GTP-bound translation factors. The protein is Large ribosomal subunit protein uL11 of Methanococcoides burtonii (strain DSM 6242 / NBRC 107633 / OCM 468 / ACE-M).